We begin with the raw amino-acid sequence, 280 residues long: Tryptophan synthase alpha chain (280 aa).

Active-site proton acceptor residues include glutamate 50 and aspartate 61.

This sequence belongs to the TrpA family. As to quaternary structure, tetramer of two alpha and two beta chains.

It catalyses the reaction (1S,2R)-1-C-(indol-3-yl)glycerol 3-phosphate + L-serine = D-glyceraldehyde 3-phosphate + L-tryptophan + H2O. The protein operates within amino-acid biosynthesis; L-tryptophan biosynthesis; L-tryptophan from chorismate: step 5/5. Its function is as follows. The alpha subunit is responsible for the aldol cleavage of indoleglycerol phosphate to indole and glyceraldehyde 3-phosphate. The chain is Tryptophan synthase alpha chain from Methylorubrum extorquens (strain PA1) (Methylobacterium extorquens).